Consider the following 302-residue polypeptide: Aspartate carbamoyltransferase catalytic subunit (302 aa).

Positions 49 and 50 each coordinate carbamoyl phosphate. Lys-77 is an L-aspartate binding site. Positions 99, 126, and 129 each coordinate carbamoyl phosphate. 2 residues coordinate L-aspartate: Arg-159 and Arg-209. Residues Ala-250 and Pro-251 each coordinate carbamoyl phosphate.

The protein belongs to the aspartate/ornithine carbamoyltransferase superfamily. ATCase family. As to quaternary structure, heterododecamer (2C3:3R2) of six catalytic PyrB chains organized as two trimers (C3), and six regulatory PyrI chains organized as three dimers (R2).

The enzyme catalyses carbamoyl phosphate + L-aspartate = N-carbamoyl-L-aspartate + phosphate + H(+). It participates in pyrimidine metabolism; UMP biosynthesis via de novo pathway; (S)-dihydroorotate from bicarbonate: step 2/3. Functionally, catalyzes the condensation of carbamoyl phosphate and aspartate to form carbamoyl aspartate and inorganic phosphate, the committed step in the de novo pyrimidine nucleotide biosynthesis pathway. This is Aspartate carbamoyltransferase catalytic subunit from Staphylococcus carnosus (strain TM300).